The sequence spans 301 residues: Mitochondrial carnitine/acylcarnitine carrier protein (301 aa).

Residue Ala2 is modified to N-acetylalanine. At 2–12 the chain is on the cytoplasmic side; the sequence is ADQPKPISPLK. Solcar repeat units follow at residues 8–99, 108–196, and 207–293; these read ISPL…GKKL, LSYP…LKNI, and LSAP…AMKF. Residues 13 to 31 form a helical membrane-spanning segment; sequence NLLAGGFGGVCLVFVGHPL. Topologically, residues 32-73 are mitochondrial matrix; sequence DTVKVRLQTQPPSLPGQPPMYSGTFDCFRKTLFREGITGLYR. The helical transmembrane segment at 74–93 threads the bilayer; it reads GMAAPIIGVTPMFAVCFFGF. The Cytoplasmic portion of the chain corresponds to 94 to 112; that stretch reads GLGKKLQQKHPEDVLSYPQ. Residues 113 to 131 traverse the membrane as a helical segment; that stretch reads LFAAGMLSGVFTTGIMTPG. Residues 132-170 lie on the Mitochondrial matrix side of the membrane; it reads ERIKCLLQIQASSGESKYTGTLDCAKKLYQEFGIRGIYK. N6-acetyllysine occurs at positions 148 and 157. Residue Lys170 is modified to N6-acetyllysine; alternate. Lys170 is subject to N6-succinyllysine; alternate. Residues 171–190 traverse the membrane as a helical segment; it reads GTVLTLMRDVPASGMYFMTY. The Cytoplasmic portion of the chain corresponds to 191–211; the sequence is EWLKNIFTPEGKRVSELSAPR. The chain crosses the membrane as a helical span at residues 212-230; sequence ILVAGGIAGIFNWAVAIPP. Topologically, residues 231–267 are mitochondrial matrix; sequence DVLKSRFQTAPPGKYPNGFRDVLRELIRDEGVTSLYK. A helical membrane pass occupies residues 268-287; it reads GFNAVMIRAFPANAACFLGF. The Cytoplasmic segment spans residues 288–301; the sequence is EVAMKFLNWATPNL.

The protein belongs to the mitochondrial carrier (TC 2.A.29) family.

It is found in the mitochondrion inner membrane. It carries out the reaction O-acetyl-(R)-carnitine(in) + (R)-carnitine(out) = O-acetyl-(R)-carnitine(out) + (R)-carnitine(in). The enzyme catalyses an O-acyl-(R)-carnitine(in) + (R)-carnitine(out) = an O-acyl-(R)-carnitine(out) + (R)-carnitine(in). The catalysed reaction is O-propanoyl-(R)-carnitine(in) + (R)-carnitine(out) = O-propanoyl-(R)-carnitine(out) + (R)-carnitine(in). It catalyses the reaction O-hexadecanoyl-(R)-carnitine(in) + (R)-carnitine(out) = O-hexadecanoyl-(R)-carnitine(out) + (R)-carnitine(in). It carries out the reaction O-octanoyl-(R)-carnitine(in) + (R)-carnitine(out) = O-octanoyl-(R)-carnitine(out) + (R)-carnitine(in). The enzyme catalyses (R)-carnitine(in) = (R)-carnitine(out). Mediates the electroneutral exchange of acylcarnitines (O-acyl-(R)-carnitine or L-acylcarnitine) of different acyl chain lengths (ranging from O-acetyl-(R)-carnitine to long-chain O-acyl-(R)-carnitines) with free carnitine ((R)-carnitine or L-carnitine) across the mitochondrial inner membrane, via a ping-pong mechanism. Key player in the mitochondrial oxidation pathway, it translocates the fatty acids in the form of acylcarnitines into the mitochondrial matrix, where the carnitine palmitoyltransferase 2 (CPT-2) activates them to undergo fatty acid beta-oxidation. Catalyzes the unidirectional transport (uniport) of carnitine at lower rates than the antiport (exchange). The protein is Mitochondrial carnitine/acylcarnitine carrier protein of Homo sapiens (Human).